Consider the following 282-residue polypeptide: Endochitinase 4 (282 aa).

The GH18 domain occupies 1–282 (GAKNGVHPPL…TWSINWDGSK (282 aa)). Catalysis depends on glutamate 112, which acts as the Proton donor. Residue asparagine 265 is glycosylated (N-linked (GlcNAc...) asparagine).

Belongs to the glycosyl hydrolase 18 family. Chitinase class V subfamily.

It localises to the secreted. It carries out the reaction Random endo-hydrolysis of N-acetyl-beta-D-glucosaminide (1-&gt;4)-beta-linkages in chitin and chitodextrins.. Its function is as follows. Secreted chitinase involved in the degradation of chitin, a component of the cell walls of fungi and exoskeletal elements of some animals (including worms and arthropods). Participates in the infection process and directly acts in the penetration process of the host cuticle. This is Endochitinase 4 (chi4) from Metarhizium anisopliae (Entomophthora anisopliae).